The chain runs to 509 residues: L-arabinose isomerase (509 aa).

E313, E340, H357, and H456 together coordinate Mn(2+).

The protein belongs to the arabinose isomerase family. Mn(2+) serves as cofactor.

It catalyses the reaction beta-L-arabinopyranose = L-ribulose. It functions in the pathway carbohydrate degradation; L-arabinose degradation via L-ribulose; D-xylulose 5-phosphate from L-arabinose (bacterial route): step 1/3. Functionally, catalyzes the conversion of L-arabinose to L-ribulose. The chain is L-arabinose isomerase from Phocaeicola vulgatus (strain ATCC 8482 / DSM 1447 / JCM 5826 / CCUG 4940 / NBRC 14291 / NCTC 11154) (Bacteroides vulgatus).